The primary structure comprises 221 residues: 3-isopropylmalate dehydratase small subunit (221 aa).

The protein belongs to the LeuD family. LeuD type 1 subfamily. As to quaternary structure, heterodimer of LeuC and LeuD.

It catalyses the reaction (2R,3S)-3-isopropylmalate = (2S)-2-isopropylmalate. It participates in amino-acid biosynthesis; L-leucine biosynthesis; L-leucine from 3-methyl-2-oxobutanoate: step 2/4. Its function is as follows. Catalyzes the isomerization between 2-isopropylmalate and 3-isopropylmalate, via the formation of 2-isopropylmaleate. The polypeptide is 3-isopropylmalate dehydratase small subunit (Nitrosomonas europaea (strain ATCC 19718 / CIP 103999 / KCTC 2705 / NBRC 14298)).